The chain runs to 150 residues: Large ribosomal subunit protein uL13 (150 aa).

The protein belongs to the universal ribosomal protein uL13 family. Part of the 50S ribosomal subunit.

In terms of biological role, this protein is one of the early assembly proteins of the 50S ribosomal subunit, although it is not seen to bind rRNA by itself. It is important during the early stages of 50S assembly. The sequence is that of Large ribosomal subunit protein uL13 from Chlorobaculum parvum (strain DSM 263 / NCIMB 8327) (Chlorobium vibrioforme subsp. thiosulfatophilum).